The sequence spans 94 residues: Integration host factor subunit beta (94 aa).

The protein belongs to the bacterial histone-like protein family. As to quaternary structure, heterodimer of an alpha and a beta chain.

Functionally, this protein is one of the two subunits of integration host factor, a specific DNA-binding protein that functions in genetic recombination as well as in transcriptional and translational control. The chain is Integration host factor subunit beta from Yersinia pseudotuberculosis serotype O:1b (strain IP 31758).